Reading from the N-terminus, the 485-residue chain is Glycogen synthase (485 aa).

Lys-17 contacts ADP-alpha-D-glucose.

The protein belongs to the glycosyltransferase 1 family. Bacterial/plant glycogen synthase subfamily.

It carries out the reaction [(1-&gt;4)-alpha-D-glucosyl](n) + ADP-alpha-D-glucose = [(1-&gt;4)-alpha-D-glucosyl](n+1) + ADP + H(+). The protein operates within glycan biosynthesis; glycogen biosynthesis. Its function is as follows. Synthesizes alpha-1,4-glucan chains using ADP-glucose. This chain is Glycogen synthase, found in Novosphingobium aromaticivorans (strain ATCC 700278 / DSM 12444 / CCUG 56034 / CIP 105152 / NBRC 16084 / F199).